The chain runs to 292 residues: Acetylglutamate kinase (292 aa).

Substrate-binding positions include 60–61 (GG), R82, and N187.

The protein belongs to the acetylglutamate kinase family. ArgB subfamily.

Its subcellular location is the cytoplasm. It carries out the reaction N-acetyl-L-glutamate + ATP = N-acetyl-L-glutamyl 5-phosphate + ADP. The protein operates within amino-acid biosynthesis; L-arginine biosynthesis; N(2)-acetyl-L-ornithine from L-glutamate: step 2/4. Functionally, catalyzes the ATP-dependent phosphorylation of N-acetyl-L-glutamate. This chain is Acetylglutamate kinase, found in Methanobrevibacter smithii (strain ATCC 35061 / DSM 861 / OCM 144 / PS).